A 556-amino-acid polypeptide reads, in one-letter code: Genetic interactor of prohibitins 3, mitochondrial (556 aa).

A mitochondrion-targeting transit peptide spans 1 to 21 (MLNLCHALRGVRQFSCSVIVK). Residues 113–305 (ESTLNDILNY…LFDLPGYSTS (193 aa)) enclose the CP-type G domain.

The protein belongs to the TRAFAC class YlqF/YawG GTPase family. GEP3 subfamily.

It is found in the mitochondrion. In terms of biological role, interacts genetically with prohibitins and thus may be involved in the mitochondrial lipid metabolism. This is Genetic interactor of prohibitins 3, mitochondrial (GEP3) from Saccharomyces cerevisiae (strain YJM789) (Baker's yeast).